Here is a 111-residue protein sequence, read N- to C-terminus: Small ubiquitin-related modifier 3 (111 aa).

A Ubiquitin-like domain is found at 16–93; it reads AHVILKVKSQ…IDACRAMSGG (78 aa). Gly93 participates in a covalent cross-link: Glycyl lysine isopeptide (Gly-Lys) (interchain with K-? in acceptor proteins).

This sequence belongs to the ubiquitin family. SUMO subfamily. In terms of assembly, interacts with SAE2, SCE1, SIZ1 and MMS21. Covalently attached to a number of proteins. Interacts with NPR1; this interaction promotes NPR1 phosphorylation and triggers its sumoylation and subsequent degradation.

It localises to the nucleus. Its subcellular location is the cytoplasm. In terms of biological role, ubiquitin-like protein which can be covalently attached to target lysines as a monomer. Does not seem to be involved in protein degradation and may function as an antagonist of ubiquitin in the degradation process. Promotes NPR1 sumoylation to activate defense gene expression and regulate its degradation. This Arabidopsis thaliana (Mouse-ear cress) protein is Small ubiquitin-related modifier 3.